The following is a 1377-amino-acid chain: DNA-directed RNA polymerase subunit beta (1377 aa).

The protein belongs to the RNA polymerase beta chain family. In terms of assembly, the RNAP catalytic core consists of 2 alpha, 1 beta, 1 beta' and 1 omega subunit. When a sigma factor is associated with the core the holoenzyme is formed, which can initiate transcription.

It catalyses the reaction RNA(n) + a ribonucleoside 5'-triphosphate = RNA(n+1) + diphosphate. DNA-dependent RNA polymerase catalyzes the transcription of DNA into RNA using the four ribonucleoside triphosphates as substrates. The protein is DNA-directed RNA polymerase subunit beta of Cereibacter sphaeroides (strain ATCC 17029 / ATH 2.4.9) (Rhodobacter sphaeroides).